The following is a 465-amino-acid chain: UDP-N-acetylmuramate--L-alanine ligase (465 aa).

115 to 121 (GAHGKTT) is a binding site for ATP.

It belongs to the MurCDEF family.

The protein localises to the cytoplasm. It catalyses the reaction UDP-N-acetyl-alpha-D-muramate + L-alanine + ATP = UDP-N-acetyl-alpha-D-muramoyl-L-alanine + ADP + phosphate + H(+). It functions in the pathway cell wall biogenesis; peptidoglycan biosynthesis. Cell wall formation. The sequence is that of UDP-N-acetylmuramate--L-alanine ligase from Coxiella burnetii (strain CbuK_Q154) (Coxiella burnetii (strain Q154)).